A 465-amino-acid polypeptide reads, in one-letter code: Fumarate hydratase class II (465 aa).

Residues 100-102 (SGT), 131-134 (HPND), 141-143 (SSN), and T189 each bind substrate. The active-site Proton donor/acceptor is H190. Residue S320 is part of the active site. Residues S321 and 326 to 328 (KVN) contribute to the substrate site.

This sequence belongs to the class-II fumarase/aspartase family. Fumarase subfamily. Homotetramer.

The protein resides in the cytoplasm. The enzyme catalyses (S)-malate = fumarate + H2O. It functions in the pathway carbohydrate metabolism; tricarboxylic acid cycle; (S)-malate from fumarate: step 1/1. Functionally, involved in the TCA cycle. Catalyzes the stereospecific interconversion of fumarate to L-malate. The protein is Fumarate hydratase class II of Mesorhizobium japonicum (strain LMG 29417 / CECT 9101 / MAFF 303099) (Mesorhizobium loti (strain MAFF 303099)).